The following is a 132-amino-acid chain: Transcription antitermination protein NusB (132 aa).

It belongs to the NusB family.

Functionally, involved in transcription antitermination. Required for transcription of ribosomal RNA (rRNA) genes. Binds specifically to the boxA antiterminator sequence of the ribosomal RNA (rrn) operons. This is Transcription antitermination protein NusB from Campylobacter jejuni subsp. doylei (strain ATCC BAA-1458 / RM4099 / 269.97).